Consider the following 105-residue polypeptide: Mini zinc finger protein 2 (105 aa).

Residues 1–29 (MGPQQDRSAAKPYANGSTAAAAAAGRKEN) are disordered. The ZF-HD dimerization-type; degenerate zinc-finger motif lies at 35–84 (YRECQRNHAASIGGHAVDGCREFMASGADGTAAALLCAACGCHQSFHRRE).

Homo- and heterodimers.

The protein resides in the cytoplasm. Functionally, inhibits zinc finger homeodomain (ZHD) transcription factors, by interacting with them to prevent both their nuclear localization and their DNA-binding properties. In Oryza sativa subsp. indica (Rice), this protein is Mini zinc finger protein 2 (MIF2).